We begin with the raw amino-acid sequence, 934 residues long: MSAHDLKLEEIVNAETLRRKLNELADTADESYTSLPMRKVVLQTLKDALASGRANAEDMLMKDGGGTLCAKRLCYLMDTLIDILFEFATTRAYPTRNPSKAENMALVAVGGYGRGGLAQGSDIDLLFLLPYKQTPWGEQVVEYTLYMLWDMGLKVGHSTRNIDECIRLAREDMTIRTALLDARFLTGDKDLFRTLEIRFEEEIVKGTEPEFIQAKLAERDARHRKAGETRYLVEPNVKEGKGGQRDLHTLFWITKYFYRVKTKEELVKLGVLSRAELKLFNKAEDFLWAVRCHMHFATLKAEERLSFDIQPEIAQRLGYTAHPGQNYVERFMKHYFLVAKDVGDLTRIICAALEEQQAKHVPGFNRIFLTFSRRKRKLSDDGAFISENHRINIARPDIFRQDPVNMIRLFHLADRHGLEFHPEAMQSLTRSLKLINADLRENPEANRLFLEILTSPRNPELILRRMNESGVLGKFIPDFGKIVAMMQFNMYHHYTVDEHLLRCIAVLSEIEHGELKTEHPLSNHLITTIKRDRNLLYVTLLLHDIAKGRPEDHSIAGARIARRLCPRFGLTPSETETVEWLVREHLTMSMVAQSRDLNDRKTIIDFADTVQTMERLKLLLILTVCDIKAVGPGIWNGWKGQLLRTLFYETELVLTGGFSELSRAARDKQAREALAERLSDWPKEERDAYLALPYTNYFLTVSLDDQVRHAHFIRDADQQGRALVTMAKPHAFEAVTEITVLAPDHPRLLSVITGACAAAGGNIVDAQIFTTSNGRALDTILISREFDTDDDERRRAERVGKVIEDVLSGKAHLPDMLAKRTKPKKAARAFKVEPRVEINNTLSNKFTVIEVEGLDRPGLLSELTGLISDLSLDIASAHITTFGEKVIDSFYVTDLVGHKISNATRQGNIKRKLLALLGAENGARTNGRSPQAAA.

A uridylyltransferase region spans residues methionine 1–serine 379. A uridylyl-removing region spans residues aspartate 380 to threonine 736. One can recognise an HD domain in the interval valine 496–methionine 613. 2 consecutive ACT domains span residues glutamate 737–alanine 818 and valine 848–glutamine 931.

It belongs to the GlnD family. Mg(2+) is required as a cofactor.

The catalysed reaction is [protein-PII]-L-tyrosine + UTP = [protein-PII]-uridylyl-L-tyrosine + diphosphate. It carries out the reaction [protein-PII]-uridylyl-L-tyrosine + H2O = [protein-PII]-L-tyrosine + UMP + H(+). Its activity is regulated as follows. Uridylyltransferase (UTase) activity is inhibited by glutamine, while glutamine activates uridylyl-removing (UR) activity. In terms of biological role, modifies, by uridylylation and deuridylylation, the PII regulatory proteins (GlnB and homologs), in response to the nitrogen status of the cell that GlnD senses through the glutamine level. Under low glutamine levels, catalyzes the conversion of the PII proteins and UTP to PII-UMP and PPi, while under higher glutamine levels, GlnD hydrolyzes PII-UMP to PII and UMP (deuridylylation). Thus, controls uridylylation state and activity of the PII proteins, and plays an important role in the regulation of nitrogen assimilation and metabolism. This Brucella suis biovar 1 (strain 1330) protein is Bifunctional uridylyltransferase/uridylyl-removing enzyme.